The following is a 137-amino-acid chain: Bacteriohemerythrin (137 aa).

7 residues coordinate Fe cation: H21, H53, E57, H72, H76, H112, and D117.

The protein belongs to the hemerythrin family. As to quaternary structure, monomer.

Its function is as follows. Oxygen-binding protein. May be involved in a storage mechanism or for delivery to oxygen-requiring enzymes. The oxygen-binding site contains two iron atoms. The sequence is that of Bacteriohemerythrin from Ralstonia nicotianae (strain ATCC BAA-1114 / GMI1000) (Ralstonia solanacearum).